A 208-amino-acid polypeptide reads, in one-letter code: Ras-related protein Rab-6B (208 aa).

Residues 20–27 (GEQSVGKT), Thr45, 68–72 (DTAGQ), and 126–129 (NKTD) each bind GTP. An Effector region motif is present at residues 42–50 (YQATIGIDF). S-geranylgeranyl cysteine attachment occurs at residues Cys206 and Cys208. Cys208 is subject to Cysteine methyl ester.

The protein belongs to the small GTPase superfamily. Rab family. As to quaternary structure, interacts (GTP-bound) with BICD1 (via C-terminus); the interaction is direct. Interacts (GDP-bound) with DYNLRB1. Interacts (GTP-bound) with APBA1/MINT1. Interacts (GTP-bound) with VPS13B.

The protein resides in the golgi apparatus membrane. It localises to the endoplasmic reticulum-Golgi intermediate compartment. It is found in the cytoplasmic vesicle. It carries out the reaction GTP + H2O = GDP + phosphate + H(+). Regulated by guanine nucleotide exchange factors (GEFs) which promote the exchange of bound GDP for free GTP, GTPase activating proteins (GAPs) which increase the GTP hydrolysis activity, and GDP dissociation inhibitors which inhibit the dissociation of the nucleotide from the GTPase. The small GTPases Rab are key regulators of intracellular membrane trafficking, from the formation of transport vesicles to their fusion with membranes. Rabs cycle between active GTP-bound and inactive GDP-bound states. In their active state, drive transport of vesicular carriers from donor organelles to acceptor organelles to regulate the membrane traffic that maintains organelle identity and morphology. Recruits VPS13B to the Golgi membrane. Regulates the compacted morphology of the Golgi. Seems to have a role in retrograde membrane traffic at the level of the Golgi complex. May function in retrograde transport in neuronal cells. Plays a role in neuron projection development. This Bos taurus (Bovine) protein is Ras-related protein Rab-6B (RAB6B).